We begin with the raw amino-acid sequence, 331 residues long: tRNA U34 carboxymethyltransferase (331 aa).

Residues K91, W105, K110, G130, 152-154, 181-182, M196, Y200, and R315 each bind carboxy-S-adenosyl-L-methionine; these read DPS and IE.

Belongs to the class I-like SAM-binding methyltransferase superfamily. CmoB family. As to quaternary structure, homotetramer.

The enzyme catalyses carboxy-S-adenosyl-L-methionine + 5-hydroxyuridine(34) in tRNA = 5-carboxymethoxyuridine(34) in tRNA + S-adenosyl-L-homocysteine + H(+). Its function is as follows. Catalyzes carboxymethyl transfer from carboxy-S-adenosyl-L-methionine (Cx-SAM) to 5-hydroxyuridine (ho5U) to form 5-carboxymethoxyuridine (cmo5U) at position 34 in tRNAs. The chain is tRNA U34 carboxymethyltransferase from Shewanella baltica (strain OS185).